Here is a 37-residue protein sequence, read N- to C-terminus: Protease 2 large chain (37 aa).

The segment covering 1–14 (NDGNGRDSDPHDPG) has biased composition (basic and acidic residues). The disordered stretch occupies residues 1-37 (NDGNGRDSDPHDPGDWTTAGQCGLWQPARNSQHWTLV). A compositionally biased stretch (polar residues) spans 28-37 (ARNSQHWTLV).

The protein belongs to the peptidase S8 family. As to quaternary structure, heterodimer of a large and a small chain.

The protein resides in the secreted. The chain is Protease 2 large chain from Achromobacter lyticus.